A 554-amino-acid chain; its full sequence is uncharacterized protein (554 aa).

Residues 1–33 (MKKILIIILFIIIFIVLIYSGLWFVIMFSLSHS) form the signal peptide.

This is an uncharacterized protein from Rickettsia prowazekii (strain Madrid E).